The following is a 185-amino-acid chain: MWKNGAMRGCNKETGEFLGPSRSQQRRTALEVLVLSEKLAALTPAQLAKLPIPERLLPHITETKRITSHIARKRQLAFLAKQMRREDDTTLETIREKLDASGIQAQREVATLHRTEQWRKRLLEEGDSALTELLNQYPQADCGKLRQLLRNTKTEQARNKPPQAFRELYQVLHGLIITQNSDNQH.

The segment at 1 to 22 (MWKNGAMRGCNKETGEFLGPSR) is disordered.

Belongs to the DarP family.

The protein localises to the cytoplasm. Its function is as follows. Member of a network of 50S ribosomal subunit biogenesis factors which assembles along the 30S-50S interface, preventing incorrect 23S rRNA structures from forming. Promotes peptidyl transferase center (PTC) maturation. In Xylella fastidiosa (strain 9a5c), this protein is Dual-action ribosomal maturation protein DarP.